The chain runs to 205 residues: FMN reductase (NADH) RutF (205 aa).

The tract at residues 171 to 205 is disordered; it reads PRAPRSGSAPAEPARAARALGARPAEGPALALRSA.

Belongs to the non-flavoprotein flavin reductase family. RutF subfamily.

The catalysed reaction is FMNH2 + NAD(+) = FMN + NADH + 2 H(+). In terms of biological role, catalyzes the reduction of FMN to FMNH2 which is used to reduce pyrimidine by RutA via the Rut pathway. This is FMN reductase (NADH) RutF from Methylorubrum extorquens (strain DSM 6343 / CIP 106787 / DM4) (Methylobacterium extorquens).